The following is a 198-amino-acid chain: NAD(P)H dehydrogenase (quinone) (198 aa).

Residues 4–189 form the Flavodoxin-like domain; sequence ILVLYYSMYG…SIARYQGEYV (186 aa). FMN-binding positions include 10 to 15 and 78 to 80; these read SMYGHI and TRF. Tyr-12 is a binding site for NAD(+). Trp-98 serves as a coordination point for substrate. FMN contacts are provided by residues 113–118 and His-133; that span reads STGTGG.

Belongs to the WrbA family. FMN serves as cofactor.

The enzyme catalyses a quinone + NADH + H(+) = a quinol + NAD(+). It catalyses the reaction a quinone + NADPH + H(+) = a quinol + NADP(+). This Salmonella typhi protein is NAD(P)H dehydrogenase (quinone).